Here is a 158-residue protein sequence, read N- to C-terminus: Putative pre-16S rRNA nuclease (158 aa).

This sequence belongs to the YqgF nuclease family.

It is found in the cytoplasm. In terms of biological role, could be a nuclease involved in processing of the 5'-end of pre-16S rRNA. In Acidiphilium cryptum (strain JF-5), this protein is Putative pre-16S rRNA nuclease.